Here is a 488-residue protein sequence, read N- to C-terminus: Glutamyl-tRNA(Gln) amidotransferase subunit A (488 aa).

Residues lysine 77 and serine 152 each act as charge relay system in the active site. Serine 176 (acyl-ester intermediate) is an active-site residue.

It belongs to the amidase family. GatA subfamily. In terms of assembly, heterotrimer of A, B and C subunits.

It catalyses the reaction L-glutamyl-tRNA(Gln) + L-glutamine + ATP + H2O = L-glutaminyl-tRNA(Gln) + L-glutamate + ADP + phosphate + H(+). Its function is as follows. Allows the formation of correctly charged Gln-tRNA(Gln) through the transamidation of misacylated Glu-tRNA(Gln) in organisms which lack glutaminyl-tRNA synthetase. The reaction takes place in the presence of glutamine and ATP through an activated gamma-phospho-Glu-tRNA(Gln). The polypeptide is Glutamyl-tRNA(Gln) amidotransferase subunit A (Streptococcus suis (strain 05ZYH33)).